The primary structure comprises 56 residues: MFNIFLDDAFIHSNNPFFGKLPEAYAISDPIVDVMPIIPVLSFLLAFVWQAAVSFR.

The propeptide occupies 1–19 (MFNIFLDDAFIHSNNPFFG). Residues 35–55 (MPIIPVLSFLLAFVWQAAVSF) traverse the membrane as a helical segment.

It belongs to the PsbK family. PSII is composed of 1 copy each of membrane proteins PsbA, PsbB, PsbC, PsbD, PsbE, PsbF, PsbH, PsbI, PsbJ, PsbK, PsbL, PsbM, PsbT, PsbX, PsbY, PsbZ, Psb30/Ycf12, at least 3 peripheral proteins of the oxygen-evolving complex and a large number of cofactors. It forms dimeric complexes.

The protein localises to the plastid. It localises to the chloroplast thylakoid membrane. One of the components of the core complex of photosystem II (PSII). PSII is a light-driven water:plastoquinone oxidoreductase that uses light energy to abstract electrons from H(2)O, generating O(2) and a proton gradient subsequently used for ATP formation. It consists of a core antenna complex that captures photons, and an electron transfer chain that converts photonic excitation into a charge separation. This chain is Photosystem II reaction center protein K, found in Pinus thunbergii (Japanese black pine).